A 505-amino-acid chain; its full sequence is Lysine--tRNA ligase (505 aa).

Mg(2+) contacts are provided by E415 and E422.

The protein belongs to the class-II aminoacyl-tRNA synthetase family. In terms of assembly, homodimer. Requires Mg(2+) as cofactor.

The protein resides in the cytoplasm. It carries out the reaction tRNA(Lys) + L-lysine + ATP = L-lysyl-tRNA(Lys) + AMP + diphosphate. The protein is Lysine--tRNA ligase (lysS) of Salmonella typhimurium (strain LT2 / SGSC1412 / ATCC 700720).